The following is a 359-amino-acid chain: UDP-N-acetylglucosamine--N-acetylmuramyl-(pentapeptide) pyrophosphoryl-undecaprenol N-acetylglucosamine transferase (359 aa).

UDP-N-acetyl-alpha-D-glucosamine contacts are provided by residues 15–17, Asn127, Arg166, Ser191, Ile245, 264–269, and Gln290; these read TGG and ALTVSE.

The protein belongs to the glycosyltransferase 28 family. MurG subfamily.

The protein resides in the cell inner membrane. It carries out the reaction di-trans,octa-cis-undecaprenyl diphospho-N-acetyl-alpha-D-muramoyl-L-alanyl-D-glutamyl-meso-2,6-diaminopimeloyl-D-alanyl-D-alanine + UDP-N-acetyl-alpha-D-glucosamine = di-trans,octa-cis-undecaprenyl diphospho-[N-acetyl-alpha-D-glucosaminyl-(1-&gt;4)]-N-acetyl-alpha-D-muramoyl-L-alanyl-D-glutamyl-meso-2,6-diaminopimeloyl-D-alanyl-D-alanine + UDP + H(+). It functions in the pathway cell wall biogenesis; peptidoglycan biosynthesis. Its function is as follows. Cell wall formation. Catalyzes the transfer of a GlcNAc subunit on undecaprenyl-pyrophosphoryl-MurNAc-pentapeptide (lipid intermediate I) to form undecaprenyl-pyrophosphoryl-MurNAc-(pentapeptide)GlcNAc (lipid intermediate II). This Pseudomonas putida (strain GB-1) protein is UDP-N-acetylglucosamine--N-acetylmuramyl-(pentapeptide) pyrophosphoryl-undecaprenol N-acetylglucosamine transferase.